A 251-amino-acid polypeptide reads, in one-letter code: DNA repair protein RecO (251 aa).

It belongs to the RecO family.

In terms of biological role, involved in DNA repair and RecF pathway recombination. The sequence is that of DNA repair protein RecO from Acidiphilium cryptum (strain JF-5).